The sequence spans 596 residues: Elongation factor 4 (596 aa).

The tr-type G domain maps to 2 to 184 (KHIRNFSIIA…VIVEQIPPPE (183 aa)). GTP contacts are provided by residues 14–19 (DHGKST) and 131–134 (NKID).

It belongs to the TRAFAC class translation factor GTPase superfamily. Classic translation factor GTPase family. LepA subfamily.

The protein localises to the cell inner membrane. It carries out the reaction GTP + H2O = GDP + phosphate + H(+). Required for accurate and efficient protein synthesis under certain stress conditions. May act as a fidelity factor of the translation reaction, by catalyzing a one-codon backward translocation of tRNAs on improperly translocated ribosomes. Back-translocation proceeds from a post-translocation (POST) complex to a pre-translocation (PRE) complex, thus giving elongation factor G a second chance to translocate the tRNAs correctly. Binds to ribosomes in a GTP-dependent manner. The sequence is that of Elongation factor 4 from Shewanella sp. (strain MR-7).